Consider the following 91-residue polypeptide: Small ribosomal subunit protein uS19 (91 aa).

This sequence belongs to the universal ribosomal protein uS19 family.

Protein S19 forms a complex with S13 that binds strongly to the 16S ribosomal RNA. This Trichodesmium erythraeum (strain IMS101) protein is Small ribosomal subunit protein uS19.